Consider the following 647-residue polypeptide: RAF proto-oncogene serine/threonine-protein kinase (647 aa).

Ser-43 carries the phosphoserine modification. An RBD domain is found at 56 to 131; the sequence is NTIRVFLPNK…IGEELQVDFL (76 aa). A Phorbol-ester/DAG-type zinc finger spans residues 138 to 184; the sequence is THNFARKTFLKLAFCDICQKFLLNGFRCQTCGYKFHEHCSTKVPTMC. 2 disordered regions span residues 236-269 and 284-334; these read HVFT…VSTT and HSES…RPRG. A compositionally biased stretch (polar residues) spans 239-269; sequence TFNTSNPSSEGTLSQRQRSTSTPNVHMVSTT. Ser-259 is modified (phosphoserine). The residue at position 268 (Thr-268) is a Phosphothreonine; by autocatalysis. Over residues 286-297 the composition is skewed to low complexity; sequence ESASPSALSGSP. A compositionally biased stretch (polar residues) spans 298 to 309; that stretch reads NNMSPTGWSQPK. Ser-338 is subject to Phosphoserine. One can recognise a Protein kinase domain in the interval 349–609; sequence VMLSTRIGSG…PQILSSIELL (261 aa). Residues 355–363 and Lys-375 each bind ATP; that span reads IGSGSFGTV. Catalysis depends on Asp-468, which acts as the Proton acceptor. Ser-499 and Ser-621 each carry phosphoserine.

The protein belongs to the protein kinase superfamily. TKL Ser/Thr protein kinase family. RAF subfamily. Post-translationally, phosphorylation at Ser-259 inactivates kinase activity. Dephosphorylation of Ser-259 by a complex containing protein phosphatase 1 relieves inactivation, leading to stimulate RAF1 activity. As to expression, isoform 1 was present in all tissues tested: skeletal muscle, intestine, brain, gizzard, heart, lung, kidney, bone marrow, spleen and bursa of Fabricius. Isoform 2 was only detected in brain, heart and skeletal muscle. In brain and heart isoform 1 is more abundant than isoform 2. In skeletal muscle isoform 2 is more abundant than isoform 1.

It is found in the cytoplasm. It localises to the cell membrane. The catalysed reaction is L-seryl-[protein] + ATP = O-phospho-L-seryl-[protein] + ADP + H(+). The enzyme catalyses L-threonyl-[protein] + ATP = O-phospho-L-threonyl-[protein] + ADP + H(+). Functionally, serine/threonine-protein kinase that acts as a regulatory link between the membrane-associated Ras GTPases and the MAPK/ERK cascade, and this critical regulatory link functions as a switch determining cell fate decisions. RAF1 activation initiates a mitogen-activated protein kinase (MAPK) cascade that comprises a sequential phosphorylation of the dual-specific MAPK kinases (MAP2K1/MEK1 and MAP2K2/MEK2) and the extracellular signal-regulated kinases (MAPK3/ERK1 and MAPK1/ERK2). The polypeptide is RAF proto-oncogene serine/threonine-protein kinase (RAF1) (Gallus gallus (Chicken)).